The primary structure comprises 371 residues: Cytoplasmic tRNA 2-thiolation protein 1 (371 aa).

The protein belongs to the TtcA family. CTU1/NCS6/ATPBD3 subfamily.

The protein localises to the cytoplasm. The protein operates within tRNA modification; 5-methoxycarbonylmethyl-2-thiouridine-tRNA biosynthesis. Its function is as follows. Plays a central role in 2-thiolation of mcm(5)S(2)U at tRNA wobble positions of tRNA(Lys), tRNA(Glu) and tRNA(Gln). Directly binds tRNAs and probably acts by catalyzing adenylation of tRNAs, an intermediate required for 2-thiolation. It is unclear whether it acts as a sulfurtransferase that transfers sulfur from thiocarboxylated URM1 onto the uridine of tRNAs at wobble position. Prior mcm(5) tRNA modification by the elongator complex is required for 2-thiolation. May also be involved in protein urmylation. This chain is Cytoplasmic tRNA 2-thiolation protein 1, found in Kluyveromyces lactis (strain ATCC 8585 / CBS 2359 / DSM 70799 / NBRC 1267 / NRRL Y-1140 / WM37) (Yeast).